A 356-amino-acid chain; its full sequence is Deoxyribonuclease-2-beta (356 aa).

An N-terminal signal peptide occupies residues 1–22 (MTAQPLKAALPLLFVALSGVLG). 4 N-linked (GlcNAc...) asparagine glycosylation sites follow: asparagine 77, asparagine 98, asparagine 114, and asparagine 273.

The protein belongs to the DNase II family. In terms of tissue distribution, liver specific.

The protein resides in the lysosome. It catalyses the reaction Endonucleolytic cleavage to nucleoside 3'-phosphates and 3'-phosphooligonucleotide end-products.. Its function is as follows. Hydrolyzes DNA under acidic conditions. Does not require divalent cations for activity. Participates in the degradation of nuclear DNA during lens cell differentiation. This is Deoxyribonuclease-2-beta (Dnase2b) from Rattus norvegicus (Rat).